A 245-amino-acid chain; its full sequence is Ubiquinone biosynthesis O-methyltransferase (245 aa).

S-adenosyl-L-methionine contacts are provided by arginine 49, glycine 69, aspartate 90, and methionine 134.

This sequence belongs to the methyltransferase superfamily. UbiG/COQ3 family.

The enzyme catalyses a 3-demethylubiquinol + S-adenosyl-L-methionine = a ubiquinol + S-adenosyl-L-homocysteine + H(+). It catalyses the reaction a 3-(all-trans-polyprenyl)benzene-1,2-diol + S-adenosyl-L-methionine = a 2-methoxy-6-(all-trans-polyprenyl)phenol + S-adenosyl-L-homocysteine + H(+). It participates in cofactor biosynthesis; ubiquinone biosynthesis. In terms of biological role, O-methyltransferase that catalyzes the 2 O-methylation steps in the ubiquinone biosynthetic pathway. This Vibrio cholerae serotype O1 (strain ATCC 39541 / Classical Ogawa 395 / O395) protein is Ubiquinone biosynthesis O-methyltransferase.